Reading from the N-terminus, the 93-residue chain is Small hydrophobic protein (93 aa).

2 helical membrane passes run 5–25 and 32–52; these read LIII…VLAY and AFGP…IYFP.

The protein localises to the membrane. In Tupaia virus (isolate Tupaia/Thailand/-/1986) (TUPV), this protein is Small hydrophobic protein.